The following is a 320-amino-acid chain: Nod factor export ATP-binding protein I (320 aa).

The 231-residue stretch at 15-245 (VSATGVWKKR…LGALKILEID (231 aa)) folds into the ABC transporter domain. 47–54 (GTNGAGKS) contributes to the ATP binding site.

It belongs to the ABC transporter superfamily. Lipooligosaccharide exporter (TC 3.A.1.102) family. The complex is composed of two ATP-binding proteins (NodI) and two transmembrane proteins (NodJ).

Its subcellular location is the cell inner membrane. Part of the ABC transporter complex NodIJ involved in the export of the nodulation factors (Nod factors), the bacterial signal molecules that induce symbiosis and subsequent nodulation induction. Nod factors are LCO (lipo-chitin oligosaccharide), a modified beta-1,4-linked N-acetylglucosamine oligosaccharide. This subunit is responsible for energy coupling to the transport system. This chain is Nod factor export ATP-binding protein I, found in Azorhizobium caulinodans (strain ATCC 43989 / DSM 5975 / JCM 20966 / LMG 6465 / NBRC 14845 / NCIMB 13405 / ORS 571).